A 164-amino-acid polypeptide reads, in one-letter code: Protein SprT (164 aa).

The region spanning 13 to 156 (YQQAEAFFKR…LCRRCREPLV (144 aa)) is the SprT-like domain. Zn(2+) is bound at residue His-69. Glu-70 is an active-site residue. A Zn(2+)-binding site is contributed by His-73.

The protein belongs to the SprT family. Requires Zn(2+) as cofactor.

The protein localises to the cytoplasm. This chain is Protein SprT, found in Pseudomonas syringae pv. syringae (strain B728a).